The sequence spans 485 residues: MKKLNMEILSERWIIATFSFQGRQYNTKKTSQILPALFAVICAAFAGYFILIGSGMFTEPSVALILLATITILLLSSSKKSFYFILLPLTLLHAFYTPTGLNFGPPSYQYIASLFATDILETKEFLLQIPVSSYLIAFAIPILIFLQYKSAVKFGIKFYRNKTFIALATLLFAYNMPLAEPLKETVSSTLKIVDEVQKLKQISQSDNWGKSTLENSRYDDYVIVLGESARKDYHHAYGYPIENTPFMSNAKGTLIDGFRSAGTNTVASLRLMLTFPDKEKWEPNYSLSLVDLIKSAGIKTYWLSNHGMIGKFDTPVSSLASKSDETFFLKKGGSFNSTNFSDFDLLPKFAQVLENSVQGKRFIVLHIYGSHPMACDRIEDYPKIFDDKDLNPRYGYLNCYVSSIKKTDEFLKRVYDQLEENVKKNHRTFSMIYFSDHGLCHQQDEKTIYFCSIKTVSAESTIIFRYSKFHQMIWNAKNIRCLNQV.

Transmembrane regions (helical) follow at residues 33-53, 55-75, 81-101, and 125-145; these read ILPA…ILIG, GMFT…ILLL, SFYF…PTGL, and FLLQ…ILIF.

The protein belongs to the phosphoethanolamine transferase family.

It is found in the cell membrane. This Haemophilus influenzae (strain ATCC 51907 / DSM 11121 / KW20 / Rd) protein is Putative phosphoethanolamine transferase HI_1064.